The following is a 61-amino-acid chain: Sec-independent protein translocase protein TatA (61 aa).

The helical transmembrane segment at 1–21 threads the bilayer; it reads MFGIGMPEMLIILVIILIIFG.

It belongs to the TatA/E family. In terms of assembly, the Tat system comprises two distinct complexes: a TatABC complex, containing multiple copies of TatA, TatB and TatC subunits, and a separate TatA complex, containing only TatA subunits. Substrates initially bind to the TatABC complex, which probably triggers association of the separate TatA complex to form the active translocon.

The protein localises to the cell inner membrane. Its function is as follows. Part of the twin-arginine translocation (Tat) system that transports large folded proteins containing a characteristic twin-arginine motif in their signal peptide across membranes. TatA could form the protein-conducting channel of the Tat system. The polypeptide is Sec-independent protein translocase protein TatA (Syntrophus aciditrophicus (strain SB)).